We begin with the raw amino-acid sequence, 589 residues long: BTB/POZ domain and ankyrin repeat-containing protein NPR3 (589 aa).

The disordered stretch occupies residues Met1–Asp25. A compositionally biased stretch (pro residues) spans Pro13 to Ala22. Positions Ala52–Pro137 constitute a BTB domain. The C2HC NPR-type zinc finger occupies Ala140–Arg154. The Zn(2+) site is built by Cys143, Cys148, His150, and Cys153. 3 ANK repeats span residues Lys260 to Asp290, Phe292 to Leu319, and Ser323 to Glu352. Residues Glu382–Thr521 are salicylic acid-binding core (SBC). Salicylate is bound at residue Arg433. The interval Asp555–Arg589 is disordered. Positions Ala558–Ser571 are enriched in low complexity. The span at Pro580–Arg589 shows a compositional bias: basic residues.

The protein belongs to the plant 'ANKYRIN-BTB/POZ' family. 'NPR1-like' subfamily. Interacts with TGA2.1, TGA2.2, TGA2.3, LG2, TGAL1, TGAL4, NRR, RH1, RH2 and RH3.

The protein resides in the nucleus. It participates in protein modification; protein ubiquitination. Its function is as follows. Salicylic acid (SA)-binding substrate-specific adapter of an E3 ubiquitin-protein ligase complex (CUL3-RBX1-BTB) which mediates the ubiquitination and subsequent proteasomal degradation of target proteins. Involved in defense response against the bacterial blight disease caused by Xanthomonas oryzae pv. oryzae (Xoo). Plants expressing an NPR3/NH3 transgene driven by its native promoter show enhanced resistance to the Xoo pathogen, and exhibit elevated sensitivity to benzothiadiazole (BTH) treatment and enhanced induction of defense-related genes upon treatment with BTH. Intriguingly, constitutive over-expression of NPR3/NH3 with a ubiquitin promoter does not confer disease resistance to Xoo. In Oryza sativa subsp. japonica (Rice), this protein is BTB/POZ domain and ankyrin repeat-containing protein NPR3.